The primary structure comprises 84 residues: uncharacterized protein (84 aa).

This is an uncharacterized protein from Caenorhabditis elegans.